A 358-amino-acid chain; its full sequence is Gentisate 1,2-dioxygenase (358 aa).

The region spanning Q239 to P358 is the Cupin type-1 domain.

The protein belongs to the gentisate 1,2-dioxygenase family. In terms of assembly, homotetramer.

It carries out the reaction 2,5-dihydroxybenzoate + O2 = 3-maleylpyruvate + H(+). It participates in aromatic compound metabolism; naphthalene degradation. Its activity is regulated as follows. Inhibited by 2,2'-dipyridyl. Functionally, catalyzes the oxygen-dependent ring fission of gentisate between the carboxyl and proximal hydroxyl groups at positions 1 and 2 of the aromatic ring to form maleylpyruvate. No activity with cathechol and protecatechuate as substrates. Part of a 3-hydroxybenzoic acid-degradation pathway. The polypeptide is Gentisate 1,2-dioxygenase (gdoA) (Haloferax sp).